Reading from the N-terminus, the 471-residue chain is Glutamate--tRNA ligase 1 (471 aa).

Residues 15 to 25 (PSPTGYLHIGG) carry the 'HIGH' region motif. A 'KMSKS' region motif is present at residues 243 to 247 (KLSKR). Lys-246 is a binding site for ATP.

The protein belongs to the class-I aminoacyl-tRNA synthetase family. Glutamate--tRNA ligase type 1 subfamily. Monomer.

The protein resides in the cytoplasm. The catalysed reaction is tRNA(Glu) + L-glutamate + ATP = L-glutamyl-tRNA(Glu) + AMP + diphosphate. Functionally, catalyzes the attachment of glutamate to tRNA(Glu) in a two-step reaction: glutamate is first activated by ATP to form Glu-AMP and then transferred to the acceptor end of tRNA(Glu). In Cereibacter sphaeroides (strain ATCC 17023 / DSM 158 / JCM 6121 / CCUG 31486 / LMG 2827 / NBRC 12203 / NCIMB 8253 / ATH 2.4.1.) (Rhodobacter sphaeroides), this protein is Glutamate--tRNA ligase 1.